The primary structure comprises 468 residues: MITERQTDSNAMWGGRFSEGPTAIMREINASIPFDKRLWQQDIAGSKAHLKMLVSRNIITAEDGQKILEGLDKIAAEYAEKGVPEDWSLEDIHMVTEKRLADLIGSAAGRLHTARSRNDQVATDFKLWVRDAIDMVDKGLTALQTALVIRAEEHAATVMPGFTHLQIAQPITLGHHLMAYYEMISRDRSRFSDGRKRLNQSPLGAAALAGTGFNIDRHQTAKALGFDAPTANSLDSVSDRDFALDYLMSATQTAIHLSRLAEEIIIWASQPYGFVSLPDAYSTGSSIMPQKRNPDAAELVRGHSGRIAGCMNALVMTMKGLPLAYSKDMQDDKPPVFEAHDLLSLAIAAMTGMIETLTFIPEKMRKTAEAGFSTATDLADWLVRQAGIPFREAHHITGSAVRLAETKGIALDALSIEDLKAIDPRIDESVKAVLSVDASVASRNSYGGTAPDQVRARILDAKKTLGLN.

This sequence belongs to the lyase 1 family. Argininosuccinate lyase subfamily.

Its subcellular location is the cytoplasm. The catalysed reaction is 2-(N(omega)-L-arginino)succinate = fumarate + L-arginine. The protein operates within amino-acid biosynthesis; L-arginine biosynthesis; L-arginine from L-ornithine and carbamoyl phosphate: step 3/3. The polypeptide is Argininosuccinate lyase (Zymomonas mobilis subsp. mobilis (strain ATCC 31821 / ZM4 / CP4)).